The primary structure comprises 305 residues: C alpha-dehydrogenase (305 aa).

Residue 10 to 34 participates in NAD(+) binding; the sequence is FITGGASGAGFGQAKVFGQAGAKIV. S144 is a binding site for substrate. Y157 functions as the Proton acceptor in the catalytic mechanism.

The protein belongs to the short-chain dehydrogenases/reductases (SDR) family.

It participates in secondary metabolite metabolism; lignin degradation. Its function is as follows. Catalyzes the C alpha dehydrogenation of arylglycerol-beta-aryl ether (C alpha alcohol type) (compound IV). The chain is C alpha-dehydrogenase (ligD) from Sphingobium sp. (strain NBRC 103272 / SYK-6).